The primary structure comprises 520 residues: Ribonuclease Y (520 aa).

A helical transmembrane segment spans residues 3–23; sequence IEIQWIGIGAAFLVGAIGGAL. The KH domain maps to 210–273; sequence AVSVVPLPND…EVARLALERL (64 aa). An HD domain is found at 336-429; it reads VLQHSIEVAF…VQAADALSGA (94 aa).

Belongs to the RNase Y family.

Its subcellular location is the cell membrane. In terms of biological role, endoribonuclease that initiates mRNA decay. This is Ribonuclease Y from Syntrophotalea carbinolica (strain DSM 2380 / NBRC 103641 / GraBd1) (Pelobacter carbinolicus).